We begin with the raw amino-acid sequence, 276 residues long: Large ribosomal subunit protein uL2 (276 aa).

Disordered stretches follow at residues 35–55 (APLH…RHQG) and 222–276 (GSVM…RRKK). The segment covering 258–276 (KTRKKNKHSDKYIVRRRKK) has biased composition (basic residues).

The protein belongs to the universal ribosomal protein uL2 family. In terms of assembly, part of the 50S ribosomal subunit. Forms a bridge to the 30S subunit in the 70S ribosome.

In terms of biological role, one of the primary rRNA binding proteins. Required for association of the 30S and 50S subunits to form the 70S ribosome, for tRNA binding and peptide bond formation. It has been suggested to have peptidyltransferase activity; this is somewhat controversial. Makes several contacts with the 16S rRNA in the 70S ribosome. In Shouchella clausii (strain KSM-K16) (Alkalihalobacillus clausii), this protein is Large ribosomal subunit protein uL2.